A 239-amino-acid chain; its full sequence is Cysteine-rich venom protein natrin-1 (239 aa).

Residues 1 to 18 (MIAFSLLCFAAVLQQSFG) form the signal peptide. The SCP domain occupies 37 to 165 (VDLHNSLRRR…AWSYFYVCQY (129 aa)). Cystine bridges form between Cys74–Cys152, Cys91–Cys166, Cys147–Cys163, Cys185–Cys192, Cys188–Cys197, Cys201–Cys234, Cys210–Cys228, and Cys219–Cys232. The 34-residue stretch at 201–234 (CTIYNKLTNCDSLLKQSSCQDDWIKSNCPASCFC) folds into the ShKT domain.

Expressed by the venom gland.

It localises to the secreted. In terms of biological role, inhibits calcium-activated potassium channels (KCa1.1/KCNMA1), voltage-gated potassium channel Kv1.3/KCNA3, and the calcium release channel/ryanodine receptor (RyR). Binds specifically to type 1 RyR (RyR1) from skeletal muscle. Inhibit both the binding of ryanodine to RyR1, and RyR1's calcium-channel activity. Inhibits carbachol-induced muscle contraction and weakly blocks muscle contraction evoked by potassium. This is Cysteine-rich venom protein natrin-1 from Naja atra (Chinese cobra).